Here is a 111-residue protein sequence, read N- to C-terminus: Cytochrome c 2.1 (111 aa).

N-acetylserine is present on Ser-2. 4 residues coordinate heme c: Cys-20, Cys-23, His-24, and Met-85.

It belongs to the cytochrome c family. In terms of processing, binds 1 heme c group covalently per subunit.

The protein localises to the mitochondrion intermembrane space. Electron carrier protein. The oxidized form of the cytochrome c heme group can accept an electron from the heme group of the cytochrome c1 subunit of cytochrome reductase. Cytochrome c then transfers this electron to the cytochrome oxidase complex, the final protein carrier in the mitochondrial electron-transport chain. In Caenorhabditis elegans, this protein is Cytochrome c 2.1 (cyc-2.1).